Reading from the N-terminus, the 135-residue chain is Galectin-1 (135 aa).

N-acetylalanine is present on Ala-2. Positions 4–135 (GLVASNLNLK…DFKIKCVAFE (132 aa)) constitute a Galectin domain. N6-acetyllysine occurs at positions 13 and 29. Ser-30 is modified (phosphoserine). A beta-D-galactoside contacts are provided by residues 45 to 49 (HFNPR), His-53, Asn-62, and 69 to 72 (WGAE). Lys-108 bears the N6-acetyllysine; alternate mark. Lys-108 bears the N6-succinyllysine; alternate mark. Lys-128 bears the N6-acetyllysine mark.

As to quaternary structure, homodimer. Binds LGALS3BP. Interacts with CD2, CD3, CD4, CD6, CD7, CD43, ALCAM and CD45. Interacts with laminin (via poly-N-acetyllactosamine). Interacts with SUSD2. Interacts with cargo receptor TMED10; the interaction mediates the translocation from the cytoplasm into the ERGIC (endoplasmic reticulum-Golgi intermediate compartment) and thereby secretion.

The protein resides in the secreted. It is found in the extracellular space. The protein localises to the extracellular matrix. Its subcellular location is the cytoplasm. Its function is as follows. Lectin that binds beta-galactoside and a wide array of complex carbohydrates. Plays a role in regulating apoptosis, cell proliferation and cell differentiation. Inhibits CD45 protein phosphatase activity and therefore the dephosphorylation of Lyn kinase. Strong inducer of T-cell apoptosis. Has hemagglutinating activity towards human erythrocytes. This Capra hircus (Goat) protein is Galectin-1.